Consider the following 244-residue polypeptide: Eukaryotic translation initiation factor 4E type 1B (244 aa).

The span at 1–26 (MNKVEGGGHKEEVVVKEKEVVKEKPS) shows a compositional bias: basic and acidic residues. Residues 1 to 57 (MNKVEGGGHKEEVVVKEKEVVKEKPSEATAEGVQAGEAKDLPGSLKTQRRKAHREHP) form a disordered region. An EIF4EBP1/2/3 binding region spans residues 65-68 (HPLQ). An mRNA-binding site is contributed by 84 to 85 (WQ). Residues 101–105 (WAVYS) are EIF4EBP1/2/3 binding. Position 130–131 (130–131 (WE)) interacts with mRNA. The tract at residues 160–167 (ETLLCLVG) is EIF4EBP1/2/3 binding. Residues 185–190 (RTKRDK) and 233–235 (AKS) each bind mRNA.

Belongs to the eukaryotic initiation factor 4E family. In terms of assembly, EIF4F is a multi-subunit complex, the composition of which varies with external and internal environmental conditions. It is composed of at least EIF4A, EIF4E and EIF4G.

Functionally, recognizes and binds the 7-methylguanosine-containing mRNA cap during an early step in the initiation of protein synthesis and facilitates ribosome binding by inducing the unwinding of the mRNAs secondary structures. The polypeptide is Eukaryotic translation initiation factor 4E type 1B (Eif4e1b) (Mus musculus (Mouse)).